Reading from the N-terminus, the 630-residue chain is 1,4-alpha-glucan branching enzyme GlgB (630 aa).

D308 (nucleophile) is an active-site residue. E361 (proton donor) is an active-site residue.

Belongs to the glycosyl hydrolase 13 family. GlgB subfamily. Monomer.

The catalysed reaction is Transfers a segment of a (1-&gt;4)-alpha-D-glucan chain to a primary hydroxy group in a similar glucan chain.. It participates in glycan biosynthesis; glycogen biosynthesis. Catalyzes the formation of the alpha-1,6-glucosidic linkages in glycogen by scission of a 1,4-alpha-linked oligosaccharide from growing alpha-1,4-glucan chains and the subsequent attachment of the oligosaccharide to the alpha-1,6 position. The protein is 1,4-alpha-glucan branching enzyme GlgB of Halothermothrix orenii (strain H 168 / OCM 544 / DSM 9562).